The sequence spans 298 residues: tRNA pseudouridine synthase B (298 aa).

Asp42 (nucleophile) is an active-site residue.

This sequence belongs to the pseudouridine synthase TruB family. Type 1 subfamily.

The enzyme catalyses uridine(55) in tRNA = pseudouridine(55) in tRNA. Functionally, responsible for synthesis of pseudouridine from uracil-55 in the psi GC loop of transfer RNAs. In Mycobacterium tuberculosis (strain CDC 1551 / Oshkosh), this protein is tRNA pseudouridine synthase B.